Reading from the N-terminus, the 143-residue chain is Nucleoside diphosphate kinase (143 aa).

Residues K11, F59, R87, T93, R104, and N114 each contribute to the ATP site. H117 functions as the Pros-phosphohistidine intermediate in the catalytic mechanism.

It belongs to the NDK family. In terms of assembly, homotetramer. It depends on Mg(2+) as a cofactor.

It localises to the cytoplasm. It carries out the reaction a 2'-deoxyribonucleoside 5'-diphosphate + ATP = a 2'-deoxyribonucleoside 5'-triphosphate + ADP. The enzyme catalyses a ribonucleoside 5'-diphosphate + ATP = a ribonucleoside 5'-triphosphate + ADP. Its function is as follows. Major role in the synthesis of nucleoside triphosphates other than ATP. The ATP gamma phosphate is transferred to the NDP beta phosphate via a ping-pong mechanism, using a phosphorylated active-site intermediate. The chain is Nucleoside diphosphate kinase from Azotobacter vinelandii (strain DJ / ATCC BAA-1303).